A 138-amino-acid chain; its full sequence is Acidic phospholipase A2 Drk-a1 (138 aa).

The first 16 residues, 1–16, serve as a signal peptide directing secretion; the sequence is MRTLWIVAVCLIGVEG. Cystine bridges form between C42-C131, C44-C60, C59-C111, C65-C138, C66-C104, C73-C97, and C91-C102. Residues Y43, G45, and G47 each coordinate Ca(2+). Residue H63 is part of the active site. D64 is a binding site for Ca(2+). D105 is an active-site residue.

It belongs to the phospholipase A2 family. Group II subfamily. D49 sub-subfamily. Ca(2+) is required as a cofactor. As to expression, expressed by the venom gland.

The protein localises to the secreted. The enzyme catalyses a 1,2-diacyl-sn-glycero-3-phosphocholine + H2O = a 1-acyl-sn-glycero-3-phosphocholine + a fatty acid + H(+). In terms of biological role, snake venom phospholipase A2 (PLA2) that exhibits high hydrolytic activities and shows strong preference for the anionic micelles (dPPC with deoxycholate) to the zwitterionic micelles (dPPC with Triton X-100). PLA2 catalyzes the calcium-dependent hydrolysis of the 2-acyl groups in 3-sn-phosphoglycerides. This is Acidic phospholipase A2 Drk-a1 from Daboia russelii (Russel's viper).